Consider the following 159-residue polypeptide: 2-C-methyl-D-erythritol 2,4-cyclodiphosphate synthase (159 aa).

2 residues coordinate a divalent metal cation: Asp-8 and His-10. 4-CDP-2-C-methyl-D-erythritol 2-phosphate contacts are provided by residues 8-10 (DVH) and 34-35 (HS). Residue His-42 participates in a divalent metal cation binding. Residues 56-58 (DIG), 132-135 (TTTE), and Arg-142 contribute to the 4-CDP-2-C-methyl-D-erythritol 2-phosphate site.

Belongs to the IspF family. In terms of assembly, homotrimer. It depends on a divalent metal cation as a cofactor.

It carries out the reaction 4-CDP-2-C-methyl-D-erythritol 2-phosphate = 2-C-methyl-D-erythritol 2,4-cyclic diphosphate + CMP. The protein operates within isoprenoid biosynthesis; isopentenyl diphosphate biosynthesis via DXP pathway; isopentenyl diphosphate from 1-deoxy-D-xylulose 5-phosphate: step 4/6. Involved in the biosynthesis of isopentenyl diphosphate (IPP) and dimethylallyl diphosphate (DMAPP), two major building blocks of isoprenoid compounds. Catalyzes the conversion of 4-diphosphocytidyl-2-C-methyl-D-erythritol 2-phosphate (CDP-ME2P) to 2-C-methyl-D-erythritol 2,4-cyclodiphosphate (ME-CPP) with a corresponding release of cytidine 5-monophosphate (CMP). In Chlorobium phaeobacteroides (strain BS1), this protein is 2-C-methyl-D-erythritol 2,4-cyclodiphosphate synthase.